A 944-amino-acid polypeptide reads, in one-letter code: Protein translocase subunit SecA (944 aa).

Residues glutamine 90, 108 to 112 (GEGKT), and aspartate 509 each bind ATP. Positions 533-565 (VKPEEGHKPPVSPQRKTKSAGFKEEKNKNLSIS) are disordered.

This sequence belongs to the SecA family. As to quaternary structure, monomer and homodimer. Part of the essential Sec protein translocation apparatus which comprises SecA, SecYEG and auxiliary proteins SecDF. Other proteins may also be involved.

The protein localises to the cell inner membrane. It is found in the cellular thylakoid membrane. It localises to the cytoplasm. It carries out the reaction ATP + H2O + cellular proteinSide 1 = ADP + phosphate + cellular proteinSide 2.. In terms of biological role, part of the Sec protein translocase complex. Interacts with the SecYEG preprotein conducting channel. Has a central role in coupling the hydrolysis of ATP to the transfer of proteins into and across the cell membrane, serving as an ATP-driven molecular motor driving the stepwise translocation of polypeptide chains across the membrane. Probably participates in protein translocation into and across both the cytoplasmic and thylakoid membranes in cyanobacterial cells. The chain is Protein translocase subunit SecA from Prochlorococcus marinus (strain NATL1A).